The following is a 196-amino-acid chain: DnaA initiator-associating protein DiaA (196 aa).

The region spanning 34 to 196 (LVQSLLNGNK…DNTLFPHQDV (163 aa)) is the SIS domain.

This sequence belongs to the SIS family. DiaA subfamily. Homotetramer; dimer of dimers.

Its function is as follows. Required for the timely initiation of chromosomal replication via direct interactions with the DnaA initiator protein. This is DnaA initiator-associating protein DiaA from Escherichia coli O6:K15:H31 (strain 536 / UPEC).